Here is a 581-residue protein sequence, read N- to C-terminus: Zinc finger protein 674 (581 aa).

The region spanning 8–79 is the KRAB domain; that stretch reads LTFKDVFVDF…DGGTPVRTCA (72 aa). 4 C2H2-type zinc fingers span residues 224–246, 252–274, 280–302, and 308–330; these read YKCT…QRTH, YECC…QRTH, YECS…QRTH, and FVCD…EKTH. Over residues 357 to 371 the composition is skewed to basic and acidic residues; it reads PQCSEHGKASDEKPS. The tract at residues 357–377 is disordered; it reads PQCSEHGKASDEKPSPTKHWR. 7 C2H2-type zinc fingers span residues 385–407, 413–435, 441–463, 469–491, 497–519, 525–547, and 553–575; these read YECS…QRIH, YECS…HRTH, YECR…QRMH, YKCN…QRIH, YECT…QRIH, YKCS…HRTH, and YECR…QRSH.

Belongs to the krueppel C2H2-type zinc-finger protein family. In terms of tissue distribution, expressed in testis.

It localises to the nucleus. Its function is as follows. May be involved in transcriptional regulation. The polypeptide is Zinc finger protein 674 (ZNF674) (Homo sapiens (Human)).